We begin with the raw amino-acid sequence, 326 residues long: Adenosine receptor A1 (326 aa).

Topologically, residues 1–10 are extracellular; the sequence is MPPSISAFQA. A helical transmembrane segment spans residues 11-33; it reads AYIGIEVLIALVSVPGNVLVIWA. Over 34–46 the chain is Cytoplasmic; it reads VKVNQALRDATFC. Residues 47–69 form a helical membrane-spanning segment; that stretch reads FIVSLAVADVAVGALVIPLAILI. The Extracellular segment spans residues 70–80; the sequence is NIGPRTYFHTC. Cys80 and Cys169 are disulfide-bonded. A helical transmembrane segment spans residues 81 to 102; the sequence is LKVACPVLILTQSSILALLAIA. Residues 103–123 lie on the Cytoplasmic side of the membrane; sequence VDRYLRVKIPLRYKTVVTPRR. Residues 124 to 146 form a helical membrane-spanning segment; it reads AVVAITGCWILSFVVGLTPMFGW. The Extracellular portion of the chain corresponds to 147–176; that stretch reads NNLSAVERDWLANGSVGEPVIECQFEKVIS. N-linked (GlcNAc...) asparagine glycans are attached at residues Asn148 and Asn159. The chain crosses the membrane as a helical span at residues 177-201; the sequence is MEYMVYFNFFVWVLPPLLLMVLIYM. Topologically, residues 202–235 are cytoplasmic; the sequence is EVFYLIRKQLNKKVSASSGDPQKYYGKELKIAKS. The helical transmembrane segment at 236 to 259 threads the bilayer; sequence LALILFLFALSWLPLHILNCITLF. Over 260-267 the chain is Extracellular; it reads CPSCHMPR. A helical membrane pass occupies residues 268–292; sequence ILIYIAIFLSHGNSAMNPIVYAFRI. At 293-326 the chain is on the cytoplasmic side; that stretch reads QKFRVTFLKIWNDHFRCQPAPPVDEDAPAERPDD. A lipid anchor (S-palmitoyl cysteine) is attached at Cys309.

It belongs to the G-protein coupled receptor 1 family.

It is found in the cell membrane. In terms of biological role, receptor for adenosine. The activity of this receptor is mediated by G proteins which inhibit adenylyl cyclase. The polypeptide is Adenosine receptor A1 (ADORA1) (Bos taurus (Bovine)).